A 160-amino-acid chain; its full sequence is SsrA-binding protein (160 aa).

A disordered region spans residues 135–160 (KTHDKRETIKERDWKREQSRILRDRG). Residues 138-160 (DKRETIKERDWKREQSRILRDRG) are compositionally biased toward basic and acidic residues.

It belongs to the SmpB family.

Its subcellular location is the cytoplasm. Its function is as follows. Required for rescue of stalled ribosomes mediated by trans-translation. Binds to transfer-messenger RNA (tmRNA), required for stable association of tmRNA with ribosomes. tmRNA and SmpB together mimic tRNA shape, replacing the anticodon stem-loop with SmpB. tmRNA is encoded by the ssrA gene; the 2 termini fold to resemble tRNA(Ala) and it encodes a 'tag peptide', a short internal open reading frame. During trans-translation Ala-aminoacylated tmRNA acts like a tRNA, entering the A-site of stalled ribosomes, displacing the stalled mRNA. The ribosome then switches to translate the ORF on the tmRNA; the nascent peptide is terminated with the 'tag peptide' encoded by the tmRNA and targeted for degradation. The ribosome is freed to recommence translation, which seems to be the essential function of trans-translation. This chain is SsrA-binding protein, found in Sphingomonas elodea.